The chain runs to 188 residues: Ribosomal RNA small subunit methyltransferase G (188 aa).

S-adenosyl-L-methionine is bound by residues Gly-69, Phe-74, 119–120 (VQ), and Arg-134.

This sequence belongs to the methyltransferase superfamily. RNA methyltransferase RsmG family.

The protein localises to the cytoplasm. The catalysed reaction is guanosine(527) in 16S rRNA + S-adenosyl-L-methionine = N(7)-methylguanosine(527) in 16S rRNA + S-adenosyl-L-homocysteine. In terms of biological role, specifically methylates the N7 position of guanine in position 527 of 16S rRNA. This is Ribosomal RNA small subunit methyltransferase G from Campylobacter jejuni subsp. jejuni serotype O:23/36 (strain 81-176).